A 107-amino-acid polypeptide reads, in one-letter code: Large ribosomal subunit protein bL21 (107 aa).

The protein belongs to the bacterial ribosomal protein bL21 family. Part of the 50S ribosomal subunit. Contacts protein L20.

This protein binds to 23S rRNA in the presence of protein L20. This Buchnera aphidicola subsp. Schizaphis graminum (strain Sg) protein is Large ribosomal subunit protein bL21.